The sequence spans 261 residues: tRNA pseudouridine synthase A (261 aa).

D52 functions as the Nucleophile in the catalytic mechanism. Y111 serves as a coordination point for substrate.

Belongs to the tRNA pseudouridine synthase TruA family. As to quaternary structure, homodimer.

The catalysed reaction is uridine(38/39/40) in tRNA = pseudouridine(38/39/40) in tRNA. Functionally, formation of pseudouridine at positions 38, 39 and 40 in the anticodon stem and loop of transfer RNAs. This Jannaschia sp. (strain CCS1) protein is tRNA pseudouridine synthase A.